Reading from the N-terminus, the 172-residue chain is Small ribosomal subunit protein uS5 (172 aa).

Residues 13-76 (LVEKMISVNR…EQARHNMMKI (64 aa)) enclose the S5 DRBM domain.

It belongs to the universal ribosomal protein uS5 family. In terms of assembly, part of the 30S ribosomal subunit. Contacts proteins S4 and S8.

In terms of biological role, with S4 and S12 plays an important role in translational accuracy. Its function is as follows. Located at the back of the 30S subunit body where it stabilizes the conformation of the head with respect to the body. The protein is Small ribosomal subunit protein uS5 of Chromobacterium violaceum (strain ATCC 12472 / DSM 30191 / JCM 1249 / CCUG 213 / NBRC 12614 / NCIMB 9131 / NCTC 9757 / MK).